Reading from the N-terminus, the 473-residue chain is Glutamate--tRNA ligase 1 (473 aa).

Positions 11-21 (PSPTGYLHIGG) match the 'HIGH' region motif. The span at 113 to 133 (KARAEGRPPRYDGRWRDRDPS) shows a compositional bias: basic and acidic residues. Residues 113–136 (KARAEGRPPRYDGRWRDRDPSEAP) form a disordered region. The short motif at 240–244 (KLSKR) is the 'KMSKS' region element. Lys-243 lines the ATP pocket.

This sequence belongs to the class-I aminoacyl-tRNA synthetase family. Glutamate--tRNA ligase type 1 subfamily. Monomer.

It is found in the cytoplasm. It carries out the reaction tRNA(Glu) + L-glutamate + ATP = L-glutamyl-tRNA(Glu) + AMP + diphosphate. Functionally, catalyzes the attachment of glutamate to tRNA(Glu) in a two-step reaction: glutamate is first activated by ATP to form Glu-AMP and then transferred to the acceptor end of tRNA(Glu). The protein is Glutamate--tRNA ligase 1 of Brucella melitensis biotype 1 (strain ATCC 23456 / CCUG 17765 / NCTC 10094 / 16M).